We begin with the raw amino-acid sequence, 313 residues long: Ribose-phosphate pyrophosphokinase (313 aa).

Residues 37–39 (DGE) and 96–97 (RQ) each bind ATP. Positions 131 and 170 each coordinate Mg(2+). K193 is a catalytic residue. Residues R195, D219, and 223–227 (DTAGT) each bind D-ribose 5-phosphate.

This sequence belongs to the ribose-phosphate pyrophosphokinase family. Class I subfamily. In terms of assembly, homohexamer. The cofactor is Mg(2+).

It localises to the cytoplasm. It catalyses the reaction D-ribose 5-phosphate + ATP = 5-phospho-alpha-D-ribose 1-diphosphate + AMP + H(+). The protein operates within metabolic intermediate biosynthesis; 5-phospho-alpha-D-ribose 1-diphosphate biosynthesis; 5-phospho-alpha-D-ribose 1-diphosphate from D-ribose 5-phosphate (route I): step 1/1. Its function is as follows. Involved in the biosynthesis of the central metabolite phospho-alpha-D-ribosyl-1-pyrophosphate (PRPP) via the transfer of pyrophosphoryl group from ATP to 1-hydroxyl of ribose-5-phosphate (Rib-5-P). The sequence is that of Ribose-phosphate pyrophosphokinase from Pseudomonas syringae pv. tomato (strain ATCC BAA-871 / DC3000).